A 248-amino-acid chain; its full sequence is ATP synthase subunit a, chloroplastic (248 aa).

5 consecutive transmembrane segments (helical) span residues 38 to 58 (QVLITSWVVIAILLGSAAIAV), 96 to 116 (VPFIGTLFLFIFVSNWSGALL), 135 to 155 (INTTVALALLTSVAYFYAGLT), 200 to 220 (LVVVVLVSLVPLVIPIPVMFL), and 221 to 241 (GLFTSGIQALIFATLAAAYIG).

It belongs to the ATPase A chain family. As to quaternary structure, F-type ATPases have 2 components, CF(1) - the catalytic core - and CF(0) - the membrane proton channel. CF(1) has five subunits: alpha(3), beta(3), gamma(1), delta(1), epsilon(1). CF(0) has four main subunits: a, b, b' and c.

It localises to the plastid. It is found in the chloroplast thylakoid membrane. Its function is as follows. Key component of the proton channel; it plays a direct role in the translocation of protons across the membrane. The chain is ATP synthase subunit a, chloroplastic from Nuphar advena (Common spatterdock).